Here is a 218-residue protein sequence, read N- to C-terminus: MAQALPPLPYDYGSLEPHVDATTMNIHHTKHHQTYVNNLNAALDKFPELKDLGLVDLNKAVGTDKLPKDVATVIRNNGGGHYNHSFFWKVMTNPSNTNGPNGDVKAAIEASFGSVDEMKAKFNAAAAGRFGSGWAWLSVKPDGSLSIDSTPNQDNPLMTALPDVAGGIPLLGLDVWEHAYYLKYQNRRPEYIAAWWNVVNWEQVAENYKAAQAGTVPL.

Mn(2+) is bound by residues histidine 27, histidine 84, aspartate 174, and histidine 178.

It belongs to the iron/manganese superoxide dismutase family. Homotetramer. The cofactor is Mn(2+).

It localises to the mitochondrion matrix. The catalysed reaction is 2 superoxide + 2 H(+) = H2O2 + O2. Its function is as follows. Destroys superoxide anion radicals which are normally produced within the cells and which are toxic to biological systems. The polypeptide is Superoxide dismutase [Mn], mitochondrial (SODA) (Chlamydomonas reinhardtii (Chlamydomonas smithii)).